We begin with the raw amino-acid sequence, 465 residues long: Kynureninase (465 aa).

N-acetylmethionine is present on Met-1. Residues Leu-137, Thr-138, Phe-165–Asp-168, Ser-221, Asp-250, His-253, and Tyr-275 contribute to the pyridoxal 5'-phosphate site. An N6-(pyridoxal phosphate)lysine modification is found at Lys-276. Positions 305 and 333 each coordinate pyridoxal 5'-phosphate.

This sequence belongs to the kynureninase family. In terms of assembly, homodimer. The cofactor is pyridoxal 5'-phosphate. Expressed in all tissues tested (heart, brain placenta, lung, liver, skeletal muscle, kidney and pancreas). Highest levels found in placenta, liver and lung. Expressed in all brain regions.

It is found in the cytoplasm. It localises to the cytosol. The catalysed reaction is L-kynurenine + H2O = anthranilate + L-alanine + H(+). It catalyses the reaction 3-hydroxy-L-kynurenine + H2O = 3-hydroxyanthranilate + L-alanine + H(+). Its pathway is amino-acid degradation; L-kynurenine degradation; L-alanine and anthranilate from L-kynurenine: step 1/1. It participates in cofactor biosynthesis; NAD(+) biosynthesis; quinolinate from L-kynurenine: step 2/3. With respect to regulation, inhibited by o-methoxybenzoylalanine (OMBA). Its function is as follows. Catalyzes the cleavage of L-kynurenine (L-Kyn) and L-3-hydroxykynurenine (L-3OHKyn) into anthranilic acid (AA) and 3-hydroxyanthranilic acid (3-OHAA), respectively. Has a preference for the L-3-hydroxy form. Also has cysteine-conjugate-beta-lyase activity. This Homo sapiens (Human) protein is Kynureninase.